We begin with the raw amino-acid sequence, 356 residues long: 3-isopropylmalate dehydrogenase (356 aa).

73–86 (GTQYDGLPREKRPE) lines the NAD(+) pocket. Substrate contacts are provided by Arg93, Arg103, Arg131, and Asp220. Mg(2+) is bound by residues Asp220, Asp244, and Asp248. 278 to 290 (GSAPDIAGKGIAN) provides a ligand contact to NAD(+).

It belongs to the isocitrate and isopropylmalate dehydrogenases family. LeuB type 1 subfamily. Homodimer. The cofactor is Mg(2+). Mn(2+) serves as cofactor.

The protein localises to the cytoplasm. It catalyses the reaction (2R,3S)-3-isopropylmalate + NAD(+) = 4-methyl-2-oxopentanoate + CO2 + NADH. Its pathway is amino-acid biosynthesis; L-leucine biosynthesis; L-leucine from 3-methyl-2-oxobutanoate: step 3/4. Catalyzes the oxidation of 3-carboxy-2-hydroxy-4-methylpentanoate (3-isopropylmalate) to 3-carboxy-4-methyl-2-oxopentanoate. The product decarboxylates to 4-methyl-2 oxopentanoate. This is 3-isopropylmalate dehydrogenase from Nitrosomonas europaea (strain ATCC 19718 / CIP 103999 / KCTC 2705 / NBRC 14298).